We begin with the raw amino-acid sequence, 301 residues long: Mitochondrial substrate carrier family protein X (301 aa).

The Mitochondrial intermembrane portion of the chain corresponds to 1-23 (MVQQQQQQQQIKKNQVKPPLYSN). Solcar repeat units lie at residues 18 to 109 (PPLY…FRTR), 117 to 199 (IKLW…MKHN), and 208 to 296 (IGLP…QKSF). The chain crosses the membrane as a helical span at residues 24–44 (LIAGAIAGVIGSSVVFPLDFV). At 45 to 75 (KTRLQQQRVSIDGSKQYNGIIDCFKKVIKNE) the chain is on the mitochondrial matrix side. The chain crosses the membrane as a helical span at residues 76-97 (GGVRGLYRGLSSNLIGIIPEKA). The Mitochondrial intermembrane segment spans residues 98–122 (LKLAMNDYFRTRFQGDRSYIKLWEE). A helical membrane pass occupies residues 123-143 (VASGGLAGMCQVVATNPMELV). Over 144–173 (KIRMQVSGLSGKKASLKEVVSELGIKGLYK) the chain is Mitochondrial matrix. A helical transmembrane segment spans residues 174–194 (GTASTLLRDVPFSMIYFSIYG). Residues 195-207 (RMKHNLTDQETGE) lie on the Mitochondrial intermembrane side of the membrane. A helical transmembrane segment spans residues 208-228 (IGLPKILLCGITAGSIAASVS). Topologically, residues 229-271 (TPFDVIKTRIQVKPGPNDPHYKGIADCFRKTIQSEGPKALFKG) are mitochondrial matrix. A helical transmembrane segment spans residues 272–292 (VLPRVCIISPLFGITLVVYEI). The Mitochondrial intermembrane segment spans residues 293 to 301 (QKSFYASTH).

Belongs to the mitochondrial carrier (TC 2.A.29) family.

The protein resides in the mitochondrion inner membrane. Its function is as follows. Mitochondrial solute carriers shuttle metabolites, nucleotides, and cofactors through the mitochondrial inner membrane. In Dictyostelium discoideum (Social amoeba), this protein is Mitochondrial substrate carrier family protein X (mcfX).